The primary structure comprises 83 residues: Cytochrome b559 subunit alpha (83 aa).

The chain crosses the membrane as a helical span at residues 22-36; that stretch reads VIHAVTLPAIFLAGF. Histidine 24 is a binding site for heme.

The protein belongs to the PsbE/PsbF family. Heterodimer of an alpha subunit and a beta subunit. PSII is composed of 1 copy each of membrane proteins PsbA, PsbB, PsbC, PsbD, PsbE, PsbF, PsbH, PsbI, PsbJ, PsbK, PsbL, PsbM, PsbT, PsbX, PsbY, PsbZ, Psb30/Ycf12, peripheral proteins PsbO, CyanoQ (PsbQ), PsbU, PsbV and a large number of cofactors. It forms dimeric complexes. Heme b is required as a cofactor.

It localises to the cellular thylakoid membrane. This b-type cytochrome is tightly associated with the reaction center of photosystem II (PSII). PSII is a light-driven water:plastoquinone oxidoreductase that uses light energy to abstract electrons from H(2)O, generating O(2) and a proton gradient subsequently used for ATP formation. It consists of a core antenna complex that captures photons, and an electron transfer chain that converts photonic excitation into a charge separation. The sequence is that of Cytochrome b559 subunit alpha from Synechococcus sp. (strain RCC307).